The primary structure comprises 344 residues: Interferon gamma receptor 1-like (344 aa).

Residues 1-22 form the signal peptide; it reads MSKHAVVQFGVVYALLFPGVFG. The Extracellular segment spans residues 23 to 229; that stretch reads FVPSPTNVSV…QPTPETDKTG (207 aa). In terms of domain architecture, Fibronectin type-III spans 24 to 102; it reads VPSPTNVSVV…TAHDGQEKSE (79 aa). 4 N-linked (GlcNAc...) asparagine glycosylation sites follow: Asn29, Asn44, Asn132, and Asn189. The helical transmembrane segment at 230–250 threads the bilayer; that stretch reads IIAALIGGATVVLFIIMGFVW. Over 251 to 344 the chain is Cytoplasmic; the sequence is LLWRKWSNIP…SSDYDRPKFL (94 aa). A disordered region spans residues 300–344; the sequence is TEEDQSVSARDDTGADPPVVSEEGMAGEDSQGLGCSSDYDRPKFL.

This sequence belongs to the type II cytokine receptor family. In terms of tissue distribution, highly expressed in brain. Also detected in spleen, heart, intestine, gill and kidney. In immune cell populations, detected at low levels in monocytes, peripheral blood leukocytes, splenocytes, neutrophils and mature macrophages.

It is found in the cell membrane. Receptor which shows binding specificity for the cytokine ifng1 (interferon gamma 1). This chain is Interferon gamma receptor 1-like, found in Carassius auratus (Goldfish).